Reading from the N-terminus, the 123-residue chain is Large ribosomal subunit protein uL18 (123 aa).

The protein belongs to the universal ribosomal protein uL18 family. Part of the 50S ribosomal subunit; part of the 5S rRNA/L5/L18/L25 subcomplex. Contacts the 5S and 23S rRNAs.

In terms of biological role, this is one of the proteins that bind and probably mediate the attachment of the 5S RNA into the large ribosomal subunit, where it forms part of the central protuberance. The chain is Large ribosomal subunit protein uL18 from Chlamydia caviae (strain ATCC VR-813 / DSM 19441 / 03DC25 / GPIC) (Chlamydophila caviae).